Here is a 374-residue protein sequence, read N- to C-terminus: Speckle-type POZ protein A (374 aa).

Positions 31–161 (KFSYMWTINN…DDKLTLFCEV (131 aa)) constitute an MATH domain. The required for nuclear localization stretch occupies residues 71 to 191 (VNPKGLDEES…PECRLADELG (121 aa)). The 125-residue stretch at 173–297 (QNTMNMVKVP…MCEEALCSNL (125 aa)) folds into the BTB domain. Residues 297 to 355 (LSVENAAEILILADLHSADQLKTQAVDFINYHASDVMETSGWKSMVVSHPHLVAEAYRS) form a homodimerization region.

This sequence belongs to the Tdpoz family. Homodimer. Part of cullin-RING-based BCR (BTB-CUL3-RBX1) E3 ubiquitin-protein ligase complexes that contain CUL3 and SPOP, plus a target protein.

It is found in the nucleus. Its subcellular location is the nucleus speckle. It participates in protein modification; protein ubiquitination. Functionally, component of a cullin-RING-based BCR (BTB-CUL3-RBX1) E3 ubiquitin-protein ligase complex that mediates the ubiquitination of target proteins, leading most often to their proteasomal degradation. The sequence is that of Speckle-type POZ protein A (spop-a) from Xenopus laevis (African clawed frog).